We begin with the raw amino-acid sequence, 457 residues long: Exodeoxyribonuclease 7 large subunit (457 aa).

The protein belongs to the XseA family. As to quaternary structure, heterooligomer composed of large and small subunits.

Its subcellular location is the cytoplasm. The catalysed reaction is Exonucleolytic cleavage in either 5'- to 3'- or 3'- to 5'-direction to yield nucleoside 5'-phosphates.. In terms of biological role, bidirectionally degrades single-stranded DNA into large acid-insoluble oligonucleotides, which are then degraded further into small acid-soluble oligonucleotides. The protein is Exodeoxyribonuclease 7 large subunit of Enterobacter sp. (strain 638).